Reading from the N-terminus, the 275-residue chain is Lycopene elongase/hydratase (275 aa).

A run of 9 helical transmembrane segments spans residues 13–33, 38–58, 84–104, 107–127, 134–154, 160–180, 203–223, 225–245, and 253–273; these read FWLY…TTVG, APAV…LYGI, AAVA…AAPL, EAWP…APPL, VLDS…YAGV, PLLA…FSAI, ALAY…LVDV, FGLL…LQVA, and YPAV…WGVV.

It belongs to the UbiA prenyltransferase family.

The protein resides in the cell membrane. The enzyme catalyses all-trans-lycopene + dimethylallyl diphosphate + H2O = dihydroisopentenyldehydrorhodopin + diphosphate. It carries out the reaction isopentenyldehydrorhodopin + dimethylallyl diphosphate + H2O = dihydrobisanhydrobacterioruberin + diphosphate. It functions in the pathway carotenoid biosynthesis. Inhibited by bacterioopsin. In terms of biological role, involved in the biosynthesis of the acyclic C50 carotenoid bacterioruberin (BR). Acts as a bifunctional elongase/hydratase that catalyzes the elongation of lycopene by attaching a C(5) isoprene unit at C-2, as well as the hydroxylation of the previous end of the molecule. The enzyme acts at both ends of the substrate, and catalyzes the conversion of lycopene to the C(45) intermediate dihydroisopentenyldehydrorhodopin (DH-IDR) and the conversion of isopentenyldehydrorhodopin (IDR) to the C(50) carotenoid dihydrobisanhydrobacterioruberin (DH-BABR). Can also catalyze the conversion of lycopene to tetrahydrobisanhydrobacterioruberin (TH-BABR). The sequence is that of Lycopene elongase/hydratase from Halobacterium salinarum (strain ATCC 700922 / JCM 11081 / NRC-1) (Halobacterium halobium).